Consider the following 226-residue polypeptide: CD9 antigen (226 aa).

The Cytoplasmic segment spans residues 1-12; the sequence is MPVKGGTKCIKY. Residue Cys-9 is the site of S-palmitoyl cysteine attachment. Residues 13-33 form a helical membrane-spanning segment; the sequence is LLFGFNFIFWLAGIAVLAVGL. Topologically, residues 34-53 are extracellular; the sequence is WLRFDSQTKSIFEQDSQPSS. A helical membrane pass occupies residues 54-74; that stretch reads FYTGVYILIGAGALMMLVGFL. Over 75–85 the chain is Cytoplasmic; that stretch reads GCCGAVQESQC. 3 S-palmitoyl cysteine lipidation sites follow: Cys-76, Cys-77, and Cys-85. The helical transmembrane segment at 86–109 threads the bilayer; sequence MLGLFFGFLLVIFAIEIAAAIWGY. At 110–193 the chain is on the extracellular side; sequence SHKDEVIQEV…KEVFHNKFHI (84 aa). Disulfide bonds link Cys-150/Cys-179 and Cys-151/Cys-165. Residues 194–219 form a helical membrane-spanning segment; sequence IGAVGIGIAVVMIFGMIFSMILCCAI. 2 S-palmitoyl cysteine lipidation sites follow: Cys-216 and Cys-217. Residues 220–226 are Cytoplasmic-facing; that stretch reads RRSREMV.

It belongs to the tetraspanin (TM4SF) family. In terms of assembly, forms both disulfide-linked homodimers and higher homooligomers as well as heterooligomers with other members of the tetraspanin family. Interacts (via the second extracellular domain) with integrin ITGAV:ITGB3. Interacts with integrin ITGA6:ITGB1; interaction takes place in oocytes and is involved in sperm-egg fusion. Part of integrin-tetraspanin complexes composed of CD81, beta-1 and beta-2 integrins in the membrane of monocyte/macrophages. Interacts with CD63; identified in a complex with CD63 and ITGB3. Associates with CR2/CD21 and with PTGFRN/CD9P1. Part of a complex composed of CD9, CD81, PTGFRN and IGSF8. Interacts directly with IGSF8. Interacts with PDPN; this interaction is homophilic and attenuates platelet aggregation and pulmonary metastasis induced by PDPN. Interacts (on T cell side) with CD81 at immunological synapses between antigen-presenting cells and T cells. In terms of processing, palmitoylated at a low, basal level in unstimulated platelets. The level of palmitoylation increases when platelets are activated by thrombin (in vitro). The protein exists in three forms with molecular masses between 22 and 27 kDa, and is known to carry covalently linked fatty acids. Palmitoylation by ZDHHC2 regulates CD9 expression, association with other tetraspanin family proteins and function in cell adhesion.

The protein localises to the cell membrane. It is found in the membrane. It localises to the secreted. Its subcellular location is the extracellular exosome. In terms of biological role, integral membrane protein associated with integrins, which regulates different processes, such as sperm-egg fusion, platelet activation and aggregation, and cell adhesion. Present at the cell surface of oocytes and plays a key role in sperm-egg fusion, possibly by organizing multiprotein complexes and the morphology of the membrane required for the fusion. In myoblasts, associates with CD81 and PTGFRN and inhibits myotube fusion during muscle regeneration. In macrophages, associates with CD81 and beta-1 and beta-2 integrins, and prevents macrophage fusion into multinucleated giant cells specialized in ingesting complement-opsonized large particles. Also prevents the fusion between mononuclear cell progenitors into osteoclasts in charge of bone resorption. Acts as a receptor for PSG17. Involved in platelet activation and aggregation. Regulates paranodal junction formation. Involved in cell adhesion, cell motility and tumor metastasis. This Felis catus (Cat) protein is CD9 antigen.